The chain runs to 97 residues: Conotoxin Cal6.1e (97 aa).

Positions 1–22 (MKLTTVLIVAVLVLAACQFTVT) are cleaved as a signal peptide. Residues 23-49 (DNSGDDTENPSLRSAGENQNPDSTKTI) are disordered. Positions 23–60 (DNSGDDTENPSLRSAGENQNPDSTKTITARATRARTNM) are excised as a propeptide. Residues 31–45 (NPSLRSAGENQNPDS) are compositionally biased toward polar residues. Disulfide bonds link cysteine 71–cysteine 87, cysteine 78–cysteine 91, and cysteine 86–cysteine 96.

Belongs to the conotoxin O1 superfamily. Expressed by the venom duct.

It is found in the secreted. Its function is as follows. Probable neurotoxin with unknown target. Possibly targets ion channels. This Californiconus californicus (California cone) protein is Conotoxin Cal6.1e.